A 201-amino-acid chain; its full sequence is Histidinol dehydrogenase (201 aa).

It belongs to the histidinol dehydrogenase family. In terms of assembly, homodimer. It depends on Zn(2+) as a cofactor.

It carries out the reaction L-histidinol + 2 NAD(+) + H2O = L-histidine + 2 NADH + 3 H(+). It participates in amino-acid biosynthesis; L-histidine biosynthesis; L-histidine from 5-phospho-alpha-D-ribose 1-diphosphate: step 9/9. Its function is as follows. Catalyzes the sequential NAD-dependent oxidations of L-histidinol to L-histidinaldehyde and then to L-histidine. The sequence is that of Histidinol dehydrogenase (hisD) from Buchnera aphidicola subsp. Schlechtendalia chinensis.